The sequence spans 203 residues: Holliday junction branch migration complex subunit RuvA (203 aa).

The tract at residues 1-64 (MIGRLRGIII…EDAQLLYGFN (64 aa)) is domain I. Residues 65–142 (NKQERTLFKE…KGLHGDLFTP (78 aa)) are domain II. The segment at 143–154 (AADLVLTSPASP) is flexible linker. The interval 155 to 203 (ATNDAEQEAVAALVALGYKPQEASRMVSKIARPDASSETLIREALRAAL) is domain III.

This sequence belongs to the RuvA family. As to quaternary structure, homotetramer. Forms an RuvA(8)-RuvB(12)-Holliday junction (HJ) complex. HJ DNA is sandwiched between 2 RuvA tetramers; dsDNA enters through RuvA and exits via RuvB. An RuvB hexamer assembles on each DNA strand where it exits the tetramer. Each RuvB hexamer is contacted by two RuvA subunits (via domain III) on 2 adjacent RuvB subunits; this complex drives branch migration. In the full resolvosome a probable DNA-RuvA(4)-RuvB(12)-RuvC(2) complex forms which resolves the HJ.

It localises to the cytoplasm. In terms of biological role, the RuvA-RuvB-RuvC complex processes Holliday junction (HJ) DNA during genetic recombination and DNA repair, while the RuvA-RuvB complex plays an important role in the rescue of blocked DNA replication forks via replication fork reversal (RFR). RuvA specifically binds to HJ cruciform DNA, conferring on it an open structure. The RuvB hexamer acts as an ATP-dependent pump, pulling dsDNA into and through the RuvAB complex. HJ branch migration allows RuvC to scan DNA until it finds its consensus sequence, where it cleaves and resolves the cruciform DNA. In Escherichia coli O9:H4 (strain HS), this protein is Holliday junction branch migration complex subunit RuvA.